The primary structure comprises 267 residues: Probable tetrahydroxynaphthalene reductase MYCGRDRAFT_87994 (267 aa).

The NADP(+) site is built by Ile26, Asp72, Asn99, and Arg132. Ser149 functions as the Proton donor in the catalytic mechanism. NADP(+) is bound by residues Tyr163, Lys167, Ile196, and Thr198. Catalysis depends on Tyr163, which acts as the Proton acceptor. Lys167 functions as the Lowers pKa of active site Tyr in the catalytic mechanism.

Belongs to the short-chain dehydrogenases/reductases (SDR) family. As to quaternary structure, homotetramer.

The enzyme catalyses scytalone + NADP(+) = naphthalene-1,3,6,8-tetrol + NADPH + H(+). The protein operates within pigment biosynthesis; melanin biosynthesis. In terms of biological role, probable tetrahydroxynaphthalene reductase; part of the gene cluster 29 that mediates the biosynthesis dihydroxynaphthalene (DHN)-melanin, a bluish-green pigment and a structural component of the conidial wall. Catalyzes the NADPH-dependent reduction of 1,3,6,8-tetrahydroxynaphthalene (T4HN) into (+)-scytalone. This Zymoseptoria tritici (strain CBS 115943 / IPO323) (Speckled leaf blotch fungus) protein is Probable tetrahydroxynaphthalene reductase MYCGRDRAFT_87994.